The sequence spans 88 residues: Small ribosomal subunit protein bS20 (88 aa).

Residues 1–12 (MANHKSALKRAK) are compositionally biased toward basic residues. The disordered stretch occupies residues 1 to 23 (MANHKSALKRAKQNTIKQMRNRS).

It belongs to the bacterial ribosomal protein bS20 family.

Binds directly to 16S ribosomal RNA. The chain is Small ribosomal subunit protein bS20 from Desulfatibacillum aliphaticivorans.